The following is a 656-amino-acid chain: Acyl-CoA-binding domain-containing protein 6 (656 aa).

The ACB domain maps to 8 to 102; the sequence is YPDRFYAAAA…LEEEDPGWYS (95 aa). Residues 44–48 and lysine 70 contribute to the an acyl-CoA site; that span reads YGLYQ. The disordered stretch occupies residues 129 to 148; sequence ASTNGTSVPEPKTISENGSS. Kelch repeat units follow at residues 194-241, 254-304, 305-354, 356-405, 406-454, and 461-507; these read KMYI…AQVS, KFFS…LVGT, TLVL…CHAD, YLLI…TVGE, NWYI…LVHS, and YLIS…EPEV. Residues 527–636 are a coiled coil; the sequence is LKKDDANELL…EQAALEAKQR (110 aa). The segment at 627–656 is disordered; that stretch reads EQAALEAKQRQSSSGMWGWLVGTPPDKSES.

It belongs to the ACBP family. In terms of tissue distribution, highly expressed in leaves. Expressed in roots and seeds.

The protein localises to the peroxisome. In terms of biological role, binds medium- and long-chain acyl-CoA esters with high affinity. Can interact in vitro with linoleoyl-CoA and linolenoyl-CoA. Binds phosphatidic acid (PA) and phosphatidylcholine (PC) in vitro. May play a role in the biosynthesis of phospholipids. May be involved in lipid degradation via peroxisomal beta-oxydation. This Oryza sativa subsp. japonica (Rice) protein is Acyl-CoA-binding domain-containing protein 6.